Consider the following 118-residue polypeptide: Large ribosomal subunit protein bL20 (118 aa).

The protein belongs to the bacterial ribosomal protein bL20 family.

Its function is as follows. Binds directly to 23S ribosomal RNA and is necessary for the in vitro assembly process of the 50S ribosomal subunit. It is not involved in the protein synthesizing functions of that subunit. The protein is Large ribosomal subunit protein bL20 of Thermosipho africanus (strain TCF52B).